Here is a 169-residue protein sequence, read N- to C-terminus: Major fimbrial subunit SMF-1 (169 aa).

The N-terminal stretch at 1–11 is a signal peptide; sequence MLAAAPLAANA.

This sequence belongs to the fimbrial protein family.

Its subcellular location is the fimbrium. Functionally, involved in adherence to eukaryotic epithelial cells and abiotic surfaces. Mediates agglutination of animal red blood cells. The polypeptide is Major fimbrial subunit SMF-1 (Stenotrophomonas maltophilia (strain K279a)).